A 184-amino-acid chain; its full sequence is ATP synthase subunit b, chloroplastic (184 aa).

Residues 29 to 49 (INLINLILVLGILFYYGKGVL) traverse the membrane as a helical segment.

The protein belongs to the ATPase B chain family. In terms of assembly, F-type ATPases have 2 components, F(1) - the catalytic core - and F(0) - the membrane proton channel. F(1) has five subunits: alpha(3), beta(3), gamma(1), delta(1), epsilon(1). F(0) has four main subunits: a(1), b(1), b'(1) and c(10-14). The alpha and beta chains form an alternating ring which encloses part of the gamma chain. F(1) is attached to F(0) by a central stalk formed by the gamma and epsilon chains, while a peripheral stalk is formed by the delta, b and b' chains.

It is found in the plastid. The protein localises to the chloroplast thylakoid membrane. Functionally, f(1)F(0) ATP synthase produces ATP from ADP in the presence of a proton or sodium gradient. F-type ATPases consist of two structural domains, F(1) containing the extramembraneous catalytic core and F(0) containing the membrane proton channel, linked together by a central stalk and a peripheral stalk. During catalysis, ATP synthesis in the catalytic domain of F(1) is coupled via a rotary mechanism of the central stalk subunits to proton translocation. Component of the F(0) channel, it forms part of the peripheral stalk, linking F(1) to F(0). The chain is ATP synthase subunit b, chloroplastic from Adiantum capillus-veneris (Maidenhair fern).